The primary structure comprises 28 residues: Caerulein precursor fragment B1 (28 aa).

This sequence belongs to the gastrin/cholecystokinin family. Expressed by the skin glands.

The protein resides in the secreted. In terms of biological role, peptide CPF-B1: Has antimicrobial activity against Gram-negative bacteria E.coli ATCC 25922 (MIC=5 uM) and multidrug-resistant A.baumannii (MIC=4-8 uM), against Gram-positive bacteria S.aureus ATCC 25923 (MIC=5 uM) and methicillin-resistant S.aureus and against fungus C.albicans ATCC 90028 (MIC=25 uM). Has some hemolytic activity against human erythrocytes at high concentrations. The sequence is that of Caerulein precursor fragment B1 from Xenopus borealis (Kenyan clawed frog).